We begin with the raw amino-acid sequence, 115 residues long: Holo-[acyl-carrier-protein] synthase (115 aa).

Mg(2+)-binding residues include aspartate 6 and glutamate 51.

This sequence belongs to the P-Pant transferase superfamily. AcpS family. Mg(2+) is required as a cofactor.

It localises to the cytoplasm. The enzyme catalyses apo-[ACP] + CoA = holo-[ACP] + adenosine 3',5'-bisphosphate + H(+). In terms of biological role, transfers the 4'-phosphopantetheine moiety from coenzyme A to a Ser of acyl-carrier-protein. In Campylobacter jejuni subsp. doylei (strain ATCC BAA-1458 / RM4099 / 269.97), this protein is Holo-[acyl-carrier-protein] synthase.